A 401-amino-acid polypeptide reads, in one-letter code: Acetate kinase (401 aa).

Asparagine 7 contacts Mg(2+). Lysine 14 lines the ATP pocket. Arginine 91 contributes to the substrate binding site. The Proton donor/acceptor role is filled by aspartate 148. Residues 208 to 212 (HLGNG), 283 to 285 (DFR), and 331 to 335 (GVGEN) contribute to the ATP site. Glutamate 384 contacts Mg(2+).

It belongs to the acetokinase family. Homodimer. Mg(2+) serves as cofactor. Mn(2+) is required as a cofactor.

The protein localises to the cytoplasm. The catalysed reaction is acetate + ATP = acetyl phosphate + ADP. It participates in metabolic intermediate biosynthesis; acetyl-CoA biosynthesis; acetyl-CoA from acetate: step 1/2. Its function is as follows. Catalyzes the formation of acetyl phosphate from acetate and ATP. Can also catalyze the reverse reaction. This is Acetate kinase from Helicobacter hepaticus (strain ATCC 51449 / 3B1).